Reading from the N-terminus, the 311-residue chain is Transcription factor BIM2 (311 aa).

Disordered stretches follow at residues 1–60 and 271–311; these read MRTG…RRSK and ANQG…MKTL. Composition is skewed to basic and acidic residues over residues 33 to 44 and 51 to 60; these read SNRDSKENDKAS and SVTEQRRRSK. A bHLH domain is found at 45–95; that stretch reads AIRSKHSVTEQRRRSKINERFQILRELIPNSEQKRDTASFLLEVIDYVQYL.

Homodimer. Interacts with the N-terminus of BZR2/BES1. As to expression, expressed constitutively in roots, leaves, stems, and flowers.

Its subcellular location is the nucleus. Functionally, positive brassinosteroid-signaling protein. The sequence is that of Transcription factor BIM2 (BIM2) from Arabidopsis thaliana (Mouse-ear cress).